We begin with the raw amino-acid sequence, 36 residues long: Conotoxin Bu21 (36 aa).

The propeptide occupies 1–21; that stretch reads DGANAEATDNKPGVFERDEKK. Disulfide bonds link C22-C28 and C23-C34.

The protein belongs to the conotoxin A superfamily. Expressed by the venom duct.

The protein localises to the secreted. This is Conotoxin Bu21 from Conus bullatus (Bubble cone).